The chain runs to 354 residues: Inactive ADP-ribosyltransferase ARH2 (354 aa).

S27 bears the Phosphoserine mark.

This sequence belongs to the ADP-ribosylglycohydrolase family.

It localises to the cytoplasm. The protein resides in the myofibril. It is found in the sarcomere. Its function is as follows. Required for myofibril assembly and outgrowth of the cardiac chambers in the developing heart. Appears to be catalytically inactive, showing no activity against O-acetyl-ADP-ribose. This chain is Inactive ADP-ribosyltransferase ARH2 (ADPRHL1), found in Pongo abelii (Sumatran orangutan).